The chain runs to 296 residues: NAD kinase (296 aa).

The active-site Proton acceptor is D73. Residues 73 to 74 (DG), K78, 151 to 152 (NE), R178, D180, and 191 to 196 (TAHAMS) contribute to the NAD(+) site.

It belongs to the NAD kinase family. It depends on a divalent metal cation as a cofactor.

It localises to the cytoplasm. The catalysed reaction is NAD(+) + ATP = ADP + NADP(+) + H(+). In terms of biological role, involved in the regulation of the intracellular balance of NAD and NADP, and is a key enzyme in the biosynthesis of NADP. Catalyzes specifically the phosphorylation on 2'-hydroxyl of the adenosine moiety of NAD to yield NADP. The chain is NAD kinase from Francisella tularensis subsp. mediasiatica (strain FSC147).